The chain runs to 113 residues: Hydrogenase maturation factor HypA (113 aa).

Residue H2 participates in Ni(2+) binding. Positions 73, 76, 89, and 92 each coordinate Zn(2+).

Belongs to the HypA/HybF family.

Functionally, involved in the maturation of [NiFe] hydrogenases. Required for nickel insertion into the metal center of the hydrogenase. The polypeptide is Hydrogenase maturation factor HypA (Aeromonas salmonicida (strain A449)).